Reading from the N-terminus, the 425-residue chain is Dihydroorotase (425 aa).

Residues histidine 60 and histidine 62 each coordinate Zn(2+). Residues 62-64 (HLR) and asparagine 94 each bind substrate. Zn(2+)-binding residues include aspartate 152, histidine 179, and histidine 232. Residue asparagine 278 coordinates substrate. Aspartate 305 is a binding site for Zn(2+). Residue aspartate 305 is part of the active site. Residue histidine 309 coordinates substrate.

The protein belongs to the metallo-dependent hydrolases superfamily. DHOase family. Class I DHOase subfamily. Requires Zn(2+) as cofactor.

The catalysed reaction is (S)-dihydroorotate + H2O = N-carbamoyl-L-aspartate + H(+). It participates in pyrimidine metabolism; UMP biosynthesis via de novo pathway; (S)-dihydroorotate from bicarbonate: step 3/3. Catalyzes the reversible cyclization of carbamoyl aspartate to dihydroorotate. This is Dihydroorotase from Syntrophotalea carbinolica (strain DSM 2380 / NBRC 103641 / GraBd1) (Pelobacter carbinolicus).